The following is a 478-amino-acid chain: MATDSWALAVDEQEAAVKSMTNLQIKEEKVKADTNGIIKTSTTAEKTDEEEKEDRAAQSLLNKLIRSNLVDNTNQVEVLQRDPNSPLYSVKSFEELRLKPQLLQGVYAMGFNRPSKIQENALPMMLAEPPQNLIAQSQSGTGKTAAFVLAMLSRVEPSDRYPQCLCLSPTYELALQTGKVIEQMGKFYPELKLAYAVRGNKLERGQKISEQIVIGTPGTVLDWCSKLKFIDPKKIKVFVLDEADVMIATQGHQDQSIRIQRMLPRNCQMLLFSATFEDSVWKFAQKVVPDPNVIKLKREEETLDTIKQYYVLCSSRDEKFQALCNLYGAITIAQAMIFCHTRKTASWLAAELSKEGHQVALLSGEMMVEQRAAVIERFREGKEKVLVTTNVCARGIDVEQVSVVINFDLPVDKDGNPDNETYLHRIGRTGRFGKRGLAVNMVDSKHSMNILNRIQEHFNKKIERLDTDDLDEIEKIAN.

Ala-2 carries the post-translational modification N-acetylalanine. The segment at 2–299 (ATDSWALAVD…DPNVIKLKRE (298 aa)) is N-terminal lobe. Residue Lys-26 forms a Glycyl lysine isopeptide (Lys-Gly) (interchain with G-Cter in SUMO1); alternate linkage. A Glycyl lysine isopeptide (Lys-Gly) (interchain with G-Cter in SUMO2); alternate cross-link involves residue Lys-26. Thr-42 bears the Phosphothreonine mark. Positions 54 to 67 (DRAAQSLLNKLIRS) are N-terminal helix. Residues 91–119 (KSFEELRLKPQLLQGVYAMGFNRPSKIQE) carry the Q motif motif. ATP is bound by residues Gln-118 and 137–144 (SQSGTGKT). The 171-residue stretch at 124–294 (MMLAEPPQNL…QKVVPDPNVI (171 aa)) folds into the Helicase ATP-binding domain. Positions 241 to 244 (DEAD) match the DEAD box motif. Residues 300–478 (EETLDTIKQY…DLDEIEKIAN (179 aa)) are C-terminal lobe. In terms of domain architecture, Helicase C-terminal spans 305–473 (TIKQYYVLCS…RLDTDDLDEI (169 aa)). Residues Arg-428 and Arg-431 each coordinate ATP.

It belongs to the DEAD box helicase family. DDX19/DBP5 subfamily.

The protein localises to the cytoplasm. It is found in the nucleus. Its subcellular location is the nucleoplasm. It catalyses the reaction ATP + H2O = ADP + phosphate + H(+). In terms of biological role, ATP-dependent RNA helicase involved in mRNA export from the nucleus. Rather than unwinding RNA duplexes, DDX19 functions as a remodeler of ribonucleoprotein particles, whereby proteins bound to nuclear mRNA are dissociated and replaced by cytoplasmic mRNA binding proteins. The sequence is that of ATP-dependent RNA helicase DDX19A (DDX19A) from Homo sapiens (Human).